The primary structure comprises 156 residues: Transcription elongation factor GreA 1 (156 aa).

A coiled-coil region spans residues 43–74; it reads RSENAEYSSAKRDLGRLESRLRYLNKQLQYAQ.

The protein belongs to the GreA/GreB family.

In terms of biological role, necessary for efficient RNA polymerase transcription elongation past template-encoded arresting sites. The arresting sites in DNA have the property of trapping a certain fraction of elongating RNA polymerases that pass through, resulting in locked ternary complexes. Cleavage of the nascent transcript by cleavage factors such as GreA or GreB allows the resumption of elongation from the new 3'terminus. GreA releases sequences of 2 to 3 nucleotides. The protein is Transcription elongation factor GreA 1 of Lactiplantibacillus plantarum (strain ATCC BAA-793 / NCIMB 8826 / WCFS1) (Lactobacillus plantarum).